We begin with the raw amino-acid sequence, 119 residues long: Putative transmembrane protein ORF119 (119 aa).

The next 3 helical transmembrane spans lie at 9 to 29 (TLAI…PAMV), 73 to 93 (QYAG…SIFT), and 95 to 115 (PIAL…AFYY).

The protein localises to the host membrane. This Acidianus convivator (ATV) protein is Putative transmembrane protein ORF119.